The following is an 84-amino-acid chain: Acid stress protein IbaG (84 aa).

The protein belongs to the BolA/IbaG family.

Functionally, involved in cell resistance against acid stress. This Escherichia coli O6:H1 (strain CFT073 / ATCC 700928 / UPEC) protein is Acid stress protein IbaG.